The chain runs to 481 residues: UDP-glycosyltransferase 85A2 (481 aa).

UDP-alpha-D-glucose-binding positions include Ser303, 360–362 (CPQ), 377–385 (HCGWNSTLE), and 399–402 (FAEQ).

Belongs to the UDP-glycosyltransferase family. In terms of tissue distribution, expressed in roots, shoots, leaves and flowers.

The polypeptide is UDP-glycosyltransferase 85A2 (UGT85A2) (Arabidopsis thaliana (Mouse-ear cress)).